A 491-amino-acid polypeptide reads, in one-letter code: CTD small phosphatase-like protein 1 (491 aa).

Disordered regions lie at residues 1-53 (MTYA…SLDY), 140-198 (KLTK…TARR), 221-249 (KIQSSQRTNSTNNNHQNGRPSTPTNTGPP), and 261-282 (TVTGLPTTGQACQQNGSGDGVT). Over residues 17 to 26 (VPPPRTPVGP) the composition is skewed to pro residues. Polar residues predominate over residues 37–49 (SASQPLQPKNGAN). Over residues 141–156 (LTKDEKNGGKMNRDGG) the composition is skewed to basic and acidic residues. Polar residues predominate over residues 176 to 187 (ASTPLNSFSANA). Over residues 223 to 237 (QSSQRTNSTNNNHQN) the composition is skewed to low complexity. Composition is skewed to polar residues over residues 238-249 (GRPSTPTNTGPP) and 264-276 (GLPTTGQACQQNG). An FCP1 homology domain is found at 307 to 465 (QDSNKKCLVI…LDILPSLEHL (159 aa)). The active-site 4-aspartylphosphate intermediate is D317. 3 residues coordinate Mg(2+): D317, D319, and N428. Residue D319 is the Proton donor of the active site.

May interact (via phosphatase domain) with cpna-1. Isoform a and isoform b may interact with lim-9 (via LIM zinc-binding domain). Isoform a and isoform b may interact (via FCP1 homology domain) with unc-89 (via fibronectin type-III domain 1, Ig-like C2-type domain 48/49 and protein kinase domain 1 or Ig-like C2-type domain 50, fibronectin type-III domain 2 and protein kinase domain 2); the interaction may act as a molecular bridge to bring two unc-89 molecules together or to stabilize a loop between the 2 protein kinase domains. Mg(2+) serves as cofactor. In terms of tissue distribution, expressed in pharyngeal, vulval and body wall muscles.

It localises to the cytoplasm. The protein resides in the myofibril. Its subcellular location is the sarcomere. The protein localises to the m line. The enzyme catalyses O-phospho-L-seryl-[protein] + H2O = L-seryl-[protein] + phosphate. It carries out the reaction O-phospho-L-threonyl-[protein] + H2O = L-threonyl-[protein] + phosphate. Its activity is regulated as follows. Inhibited by beryllium trifluoride (BeF(3-)) and tetrafluoroaluminate (AlF(4-)) but not by sodium fluoride (NaF) or sodium orthovanadate (Na3VO4). Functionally, phosphatase which may play a role in the egg laying muscles. This is CTD small phosphatase-like protein 1 from Caenorhabditis elegans.